A 703-amino-acid polypeptide reads, in one-letter code: Subtilisin-like protease SBT4.7 (703 aa).

A signal peptide spans 1–19 (MAKRDYFCFVVLFLSSVSA). The propeptide at 20–107 (VIDDPQNKQV…VFPNINYKLQ (88 aa)) is activation peptide. In terms of domain architecture, Inhibitor I9 spans 29-106 (VYVVYMGSLP…SVFPNINYKL (78 aa)). In terms of domain architecture, Peptidase S8 spans 111-556 (SWDFLGLKEG…AGHVDQIAAI (446 aa)). The active-site Charge relay system is Asp139. Residue Asn170 is glycosylated (N-linked (GlcNAc...) asparagine). The Charge relay system role is filled by His194. N-linked (GlcNAc...) asparagine glycans are attached at residues Asn217, Asn360, Asn416, and Asn433. The PA domain maps to 350–411 (KYPLVYGDNF…LLPPDDFDSL (62 aa)). The Charge relay system role is filled by Ser495. 3 N-linked (GlcNAc...) asparagine glycosylation sites follow: Asn577, Asn615, and Asn633.

Belongs to the peptidase S8 family. Post-translationally, the C-terminal propeptide is autocleaved.

It is found in the secreted. The protein is Subtilisin-like protease SBT4.7 of Arabidopsis thaliana (Mouse-ear cress).